A 155-amino-acid polypeptide reads, in one-letter code: uncharacterized protein (155 aa).

This is an uncharacterized protein from Methanocaldococcus jannaschii (strain ATCC 43067 / DSM 2661 / JAL-1 / JCM 10045 / NBRC 100440) (Methanococcus jannaschii).